Here is a 492-residue protein sequence, read N- to C-terminus: MDPYKFRPSSSNDTPFWTTNAGDPVSNNNSSMTVGPRGPILLEDYHMIEKLANFTRERIPERVVHARGMSAKGFFEVTHDVTDLTCADFLRAPGVQTPVIVRFSTVIHERGSPETLRDPRGFATKFYTREGNFDIVGNNFPVFFIRDGIKFPDVVHAFKPNPKSHIQEYWRIFDFCSHHPESLSTFAWFFDDVGIPQDYRHMEGFGVHTYCLINKAGKVTYVKFHWKPTCGVKCLMDDEAIKVGGANHSHATQDLYDSIAAGNFPEWKLMIQTMDPADEDKFSFDPLDMTKIWPEDMFPLHPVGRLVLNRNIDNWFAENEMLAFNPAHVVPGVYYSNDKLFQLRLFAYSDTQRHRLGTNYLQLPVNAPKCPYHNNHYDGFMNFMHRDEEVDYFQSRYDPVRHAEKVPIPNAICSGRREKCVIEKEDNFRQPGDRYRSWAPDRQERFLCRLVNALSEPRITHEIRSIWVSWWTQCDKSLGQKLASRLNVRPNI.

A disordered region spans residues 1 to 32; it reads MDPYKFRPSSSNDTPFWTTNAGDPVSNNNSSM. The span at 8-32 shows a compositional bias: polar residues; the sequence is PSSSNDTPFWTTNAGDPVSNNNSSM. Active-site residues include H65 and N138. Y348 contacts heme.

It belongs to the catalase family. As to quaternary structure, homotetramer. Heme is required as a cofactor. Abundant in hypocotyls and roots. Low levels are seen in the endosperms and cotyledons.

The protein resides in the peroxisome. Its subcellular location is the glyoxysome. The catalysed reaction is 2 H2O2 = O2 + 2 H2O. In terms of biological role, occurs in almost all aerobically respiring organisms and serves to protect cells from the toxic effects of hydrogen peroxide. The sequence is that of Catalase isozyme 2 (CAT2) from Ricinus communis (Castor bean).